Consider the following 866-residue polypeptide: Interleukin-17 receptor A (866 aa).

Positions 1–32 are cleaved as a signal peptide; it reads MGAARSPPSAVPGPLLGLLLLLLGVLAPGGAS. Over 33–320 the chain is Extracellular; that stretch reads LRLLDHRALV…EPIPDYMPLW (288 aa). A disulfide bridge connects residues cysteine 43 and cysteine 50. 3 N-linked (GlcNAc...) asparagine glycosylation sites follow: asparagine 49, asparagine 54, and asparagine 67. Cystine bridges form between cysteine 57/cysteine 126 and cysteine 185/cysteine 196. N-linked (GlcNAc...) asparagine glycans are attached at residues asparagine 206, asparagine 225, asparagine 242, and asparagine 265. Disulfide bonds link cysteine 245-cysteine 276, cysteine 277-cysteine 303, and cysteine 290-cysteine 294. Residues 321 to 341 traverse the membrane as a helical segment; that stretch reads VYWFITGISILLVGSVILLIV. Over 342–866 the chain is Cytoplasmic; that stretch reads CMTWRLAGPG…MGSESEGPSA (525 aa). In terms of domain architecture, SEFIR spans 377-534; that stretch reads PRKVWIIYSA…LMDRFEEVYF (158 aa). 2 positions are modified to phosphoserine: serine 708 and serine 736. Disordered regions lie at residues 717-736 and 773-840; these read LFLPVDPEDSPLGSSTPMAS and MVLT…RSLQ. Positions 788-801 are enriched in polar residues; the sequence is QSVQSDQGYISRSS. Acidic residues predominate over residues 809–819; sequence TEMEEEEEEEQ.

Forms heterodimers with IL17RC; the heterodimer binds IL17A and IL17F homodimers as well as the heterodimer formed by IL17A and IL17F. Forms complexes with 2:1 binding stoichiometry: two receptor chains for one interleukin molecule. IL17A homodimer preferentially drives the formation of IL17RA-IL17RC heterodimeric receptor complex, whereas IL17F homodimer forms predominantly complexes with IL17RC homodimer. IL17A homodimer adopts an asymmetrical ternary structure with one IL17RA molecule, allowing for high affinity interactions of one IL17A monomer with one IL17RA molecule (via D1 and D2 domains), while disfavoring binding of a second IL17RA molecule on the other IL17A monomer. IL17A-IL17F forms complexes with IL17RA-IL17RC, but with lower affinity when compared to IL17A homodimer. IL17RA chain cannot distinguish between IL17A and IL17F molecules, potentially enabling the formation of topologically distinct complexes. Interacts with TRAF3IP2. Forms heterodimers with IL17RE; the heterodimer binds IL17C. In terms of assembly, (Microbial infection) Interacts with SARS coronavirus-2/SARS-CoV-2 virus protein ORF8. Post-translationally, glycosylated. Widely expressed.

Its subcellular location is the cell membrane. It is found in the secreted. Its function is as follows. Receptor for IL17A and IL17F, major effector cytokines of innate and adaptive immune system involved in antimicrobial host defense and maintenance of tissue integrity. Receptor for IL17A. Receptor for IL17F. Binds to IL17A with higher affinity than to IL17F. Binds IL17A and IL17F homodimers as part of a heterodimeric complex with IL17RC. Also binds heterodimers formed by IL17A and IL17F as part of a heterodimeric complex with IL17RC. Cytokine binding triggers homotypic interaction of IL17RA and IL17RC chains with TRAF3IP2 adapter, leading to TRAF6-mediated activation of NF-kappa-B and MAPkinase pathways, ultimately resulting in transcriptional activation of cytokines, chemokines, antimicrobial peptides and matrix metalloproteinases, with potential strong immune inflammation. Involved in antimicrobial host defense primarily promoting neutrophil activation and recruitment at infection sites to destroy extracellular bacteria and fungi. In secondary lymphoid organs, contributes to germinal center formation by regulating the chemotactic response of B cells to CXCL12 and CXCL13, enhancing retention of B cells within the germinal centers, B cell somatic hypermutation rate and selection toward plasma cells. Plays a role in the maintenance of the integrity of epithelial barriers during homeostasis and pathogen infection. Stimulates the production of antimicrobial beta-defensins DEFB1, DEFB103A, and DEFB104A by mucosal epithelial cells, limiting the entry of microbes through the epithelial barriers. Involved in antiviral host defense through various mechanisms. Enhances immunity against West Nile virus by promoting T cell cytotoxicity. Contributes to Influenza virus clearance by driving the differentiation of B-1a B cells, providing for production of virus-specific IgM antibodies at first line of host defense. Receptor for IL17C as part of a heterodimeric complex with IL17RE. (Microbial infection) Receptor for SARS coronavirus-2/SARS-CoV-2 virus protein ORF8, leading to IL17 pathway activation and an increased secretion of pro-inflammatory factors through activating NF-kappa-B signaling pathway. The sequence is that of Interleukin-17 receptor A from Homo sapiens (Human).